Here is a 140-residue protein sequence, read N- to C-terminus: Cystatin-C (140 aa).

An N-terminal signal peptide occupies residues 1-20 (MASPLRSLLFLLAVLAVAWA). The short motif at 75–79 (QLVAG) is the Secondary area of contact element. Cystine bridges form between Cys93–Cys103 and Cys117–Cys137.

Belongs to the cystatin family.

The protein localises to the secreted. Its function is as follows. As an inhibitor of cysteine proteinases, this protein is thought to serve an important physiological role as a local regulator of this enzyme activity. In Mus musculus (Mouse), this protein is Cystatin-C (Cst3).